Here is a 64-residue protein sequence, read N- to C-terminus: Frontoxin IV (64 aa).

Intrachain disulfides connect Cys-3–Cys-24, Cys-6–Cys-11, Cys-17–Cys-41, Cys-45–Cys-57, and Cys-58–Cys-63.

As to expression, expressed by the venom gland.

Its subcellular location is the secreted. Its function is as follows. Produces peripheral paralysis by blocking neuromuscular transmission at the postsynaptic site. Binds to the muscular nicotinic acetylcholine receptor (nAChR). The protein is Frontoxin IV of Micrurus frontalis (Coral snake).